A 221-amino-acid polypeptide reads, in one-letter code: Ribonuclease T (221 aa).

The Exonuclease domain maps to 20–194 (VVIDIETAGF…YDTLQTANLF (175 aa)). Asp-23, Glu-25, His-181, and Asp-186 together coordinate Mg(2+). His-181 (proton donor/acceptor) is an active-site residue.

This sequence belongs to the RNase T family. As to quaternary structure, homodimer. It depends on Mg(2+) as a cofactor.

In terms of biological role, trims short 3' overhangs of a variety of RNA species, leaving a one or two nucleotide 3' overhang. Responsible for the end-turnover of tRNA: specifically removes the terminal AMP residue from uncharged tRNA (tRNA-C-C-A). Also appears to be involved in tRNA biosynthesis. In Buchnera aphidicola subsp. Acyrthosiphon pisum (strain APS) (Acyrthosiphon pisum symbiotic bacterium), this protein is Ribonuclease T.